The chain runs to 691 residues: Elongation factor G (691 aa).

The tr-type G domain maps to Glu8–Ile282. GTP-binding positions include Ala17–Thr24, Asp81–His85, and Asn135–Asp138.

The protein belongs to the TRAFAC class translation factor GTPase superfamily. Classic translation factor GTPase family. EF-G/EF-2 subfamily.

It localises to the cytoplasm. Its function is as follows. Catalyzes the GTP-dependent ribosomal translocation step during translation elongation. During this step, the ribosome changes from the pre-translocational (PRE) to the post-translocational (POST) state as the newly formed A-site-bound peptidyl-tRNA and P-site-bound deacylated tRNA move to the P and E sites, respectively. Catalyzes the coordinated movement of the two tRNA molecules, the mRNA and conformational changes in the ribosome. The chain is Elongation factor G from Synechococcus sp. (strain WH7803).